The chain runs to 628 residues: Kinesin-like protein tea2 (628 aa).

The segment at 2 to 122 (SSSSSKPVNT…TTSQQTNSKG (121 aa)) is interaction with mal3. Residue Ser82 is modified to Phosphoserine. One can recognise a Kinesin motor domain in the interval 132–460 (GIITSIRIRP…LKFASRAQNL (329 aa)). 218–225 (GMTGTGKT) lines the ATP pocket. Residues 530 to 557 (LRMEELLSDHNFEIADLRDELQDKEQII) are a coiled coil. The interval 588 to 628 (VTRGSRSSSDQFSNETKTEILPDDQQQSKKDSVTQETQLLS) is disordered. Polar residues predominate over residues 589–602 (TRGSRSSSDQFSNE). Positions 603–620 (TKTEILPDDQQQSKKDSV) are enriched in basic and acidic residues.

It belongs to the TRAFAC class myosin-kinesin ATPase superfamily. Kinesin family. Interacts with mal3 and tip1.

The protein resides in the cytoplasm. The protein localises to the cytoskeleton. Promotes microtubule growth, possibly through interactions with the microtubule end, and is important for establishing and maintaining polarized growth along the long axis of the cell. Acts as a kinesin motor protein that moves along microtubules and is required for proper localization of tea1 and tip1 to the cell tips and microtubules, respectively. ATPase activity stimulated via interaction with mal3. This chain is Kinesin-like protein tea2, found in Schizosaccharomyces pombe (strain 972 / ATCC 24843) (Fission yeast).